The chain runs to 373 residues: Queuine tRNA-ribosyltransferase (373 aa).

The Proton acceptor role is filled by aspartate 90. Substrate-binding positions include 90–94 (DSGGF), aspartate 144, glutamine 193, and glycine 220. An RNA binding region spans residues 251 to 257 (GVGTPED). Aspartate 270 serves as the catalytic Nucleophile. The interval 275 to 279 (TRNAR) is RNA binding; important for wobble base 34 recognition. Residues cysteine 308, cysteine 310, cysteine 313, and histidine 339 each contribute to the Zn(2+) site.

It belongs to the queuine tRNA-ribosyltransferase family. As to quaternary structure, homodimer. Within each dimer, one monomer is responsible for RNA recognition and catalysis, while the other monomer binds to the replacement base PreQ1. Zn(2+) serves as cofactor.

It catalyses the reaction 7-aminomethyl-7-carbaguanine + guanosine(34) in tRNA = 7-aminomethyl-7-carbaguanosine(34) in tRNA + guanine. The protein operates within tRNA modification; tRNA-queuosine biosynthesis. Functionally, catalyzes the base-exchange of a guanine (G) residue with the queuine precursor 7-aminomethyl-7-deazaguanine (PreQ1) at position 34 (anticodon wobble position) in tRNAs with GU(N) anticodons (tRNA-Asp, -Asn, -His and -Tyr). Catalysis occurs through a double-displacement mechanism. The nucleophile active site attacks the C1' of nucleotide 34 to detach the guanine base from the RNA, forming a covalent enzyme-RNA intermediate. The proton acceptor active site deprotonates the incoming PreQ1, allowing a nucleophilic attack on the C1' of the ribose to form the product. After dissociation, two additional enzymatic reactions on the tRNA convert PreQ1 to queuine (Q), resulting in the hypermodified nucleoside queuosine (7-(((4,5-cis-dihydroxy-2-cyclopenten-1-yl)amino)methyl)-7-deazaguanosine). The chain is Queuine tRNA-ribosyltransferase from Campylobacter jejuni subsp. doylei (strain ATCC BAA-1458 / RM4099 / 269.97).